We begin with the raw amino-acid sequence, 448 residues long: tRNA modification GTPase MnmE (448 aa).

Residues Arg24, Glu81, and Lys120 each coordinate (6S)-5-formyl-5,6,7,8-tetrahydrofolate. Positions 216–373 constitute a TrmE-type G domain; that stretch reads GLNVVLVGAP…LKRTLLREAG (158 aa). A K(+)-binding site is contributed by Asn226. GTP is bound by residues 226–231, 245–251, and 270–273; these read NVGKSS, TDIAGTT, and DTAG. A Mg(2+)-binding site is contributed by Ser230. Positions 245, 247, and 250 each coordinate K(+). Residue Thr251 coordinates Mg(2+). Position 448 (Lys448) interacts with (6S)-5-formyl-5,6,7,8-tetrahydrofolate.

The protein belongs to the TRAFAC class TrmE-Era-EngA-EngB-Septin-like GTPase superfamily. TrmE GTPase family. Homodimer. Heterotetramer of two MnmE and two MnmG subunits. The cofactor is K(+).

The protein resides in the cytoplasm. Its function is as follows. Exhibits a very high intrinsic GTPase hydrolysis rate. Involved in the addition of a carboxymethylaminomethyl (cmnm) group at the wobble position (U34) of certain tRNAs, forming tRNA-cmnm(5)s(2)U34. The sequence is that of tRNA modification GTPase MnmE from Neisseria meningitidis serogroup C (strain 053442).